A 307-amino-acid polypeptide reads, in one-letter code: Cyclin-dependent kinase 5 activator 1 (307 aa).

G2 is lipidated: N-myristoyl glycine. S8 is modified (phosphoserine; by CDK5). Residues 97–136 are disordered; it reads TFAQPPPAQPPAPPASQLSGSQTGGSSSVKKAPHPAVTSA. The segment covering 100-110 has biased composition (pro residues); the sequence is QPPPAQPPAPP. Residues 111–124 are compositionally biased toward low complexity; sequence ASQLSGSQTGGSSS. T138 is modified (phosphothreonine; by CDK5).

It belongs to the cyclin-dependent kinase 5 activator family. Heterodimer composed of a catalytic subunit CDK5 and a regulatory subunit CDK5R1 (p25) and macromolecular complex composed of at least CDK5, CDK5R1 (p35) and CDK5RAP1 or CDK5RAP2 or CDK5RAP3. Only the heterodimer shows kinase activity. Interacts with EPHA4 and NGEF; may mediate the activation of NGEF by EPHA4. Interacts with RASGRF2. The complex p35/CDK5 interacts with CLOCK. The p35 form is proteolytically cleaved by calpain, giving rise to the p25 form. P35 has a 5 to 10 fold shorter half-life compared to p25. The conversion results in deregulation of the CDK5 kinase: p25/CDK5 kinase displays an increased and altered tau phosphorylation in comparison to the p35/CDK5 kinase in vivo. In terms of processing, myristoylated. A proper myristoylation signal is essential for the proper distribution of p35. Post-translationally, ubiquitinated, leading to its degradation: degradation of p35 by proteasome results in down-regulation of CDK5 activity. During this process, CDK5 phosphorylates p35 and induces its ubiquitination and subsequent degradation. Ubiquitinated by the CRL2(FEM1B) complex, which recognizes the -Gly-Leu-Asp-Arg C-degron at the C-terminus, leading to its degradation. Phosphorylation at Ser-8 and Thr-138 by CDK5 prevents calpain-mediated proteolysis. In terms of tissue distribution, brain and neuron specific.

It is found in the cell membrane. The protein resides in the cell projection. Its subcellular location is the neuron projection. The protein localises to the nucleus. It localises to the cytoplasm. It is found in the perinuclear region. The protein resides in the perikaryon. Functionally, p35 is a neuron specific activator of CDK5. The complex p35/CDK5 is required for neurite outgrowth and cortical lamination. Involved in dendritic spine morphogenesis by mediating the EFNA1-EPHA4 signaling. Activator of TPKII. The complex p35/CDK5 participates in the regulation of the circadian clock by modulating the function of CLOCK protein: phosphorylates CLOCK at 'Thr-451' and 'Thr-461' and regulates the transcriptional activity of the CLOCK-BMAL1 heterodimer in association with altered stability and subcellular distribution. The polypeptide is Cyclin-dependent kinase 5 activator 1 (CDK5R1) (Homo sapiens (Human)).